We begin with the raw amino-acid sequence, 200 residues long: Pyrrolidone-carboxylate peptidase (200 aa).

Active-site residues include Glu-78, Cys-141, and His-165.

The protein belongs to the peptidase C15 family. As to quaternary structure, homotetramer.

It is found in the cytoplasm. It carries out the reaction Release of an N-terminal pyroglutamyl group from a polypeptide, the second amino acid generally not being Pro.. Its function is as follows. Removes 5-oxoproline from various penultimate amino acid residues except L-proline. This Thermococcus onnurineus (strain NA1) protein is Pyrrolidone-carboxylate peptidase.